A 651-amino-acid polypeptide reads, in one-letter code: MADSAELKQMVMSLRVSELQVLLGYAGRNKHGRKHELLTKALHLLKAGCSPAVQMKIKELYRRRFPQKIMTPADLSIPNVHSSPMPPTLSPSTIPQLTYDGHPASSPLLPVSLLGPKHELELPHLTSALHPVHPDIKLQKLPFYDLLDELIKPTSLASDNSQRFRETCFAFALTPQQVQQISSSMDISGTKCDFTVQVQLRFCLSETSCPQEDHFPPNLCVKVNTKPCSLPGYLPPTKNGVEPKRPSRPINITSLVRLSTTVPNTIVVSWTAEIGRTYSMAVYLVKQLSSTVLLQRLRAKGIRNPDHSRALIKEKLTADPDSEIATTSLRVSLLCPLGKMRLTIPCRALTCSHLQCFDATLYIQMNEKKPTWVCPVCDKKAPYEHLIIDGLFMEILKYCTDCDEIQFKEDGSWAPMRSKKEVQEVTASYNGVDGCLSSTLEHQVASHNQSSNKNKKVEVIDLTIDSSSDEEEEEPPAKRTCPSLSPTSPLSNKGILSLPHQASPVSRTPSLPAVDTSYINTSLIQDYRHPFHMTPMPYDLQGLDFFPFLSGDNQHYNTSLLAAAAAAVSDDQDLLHSSRFFPYTSSQMFLDQLSAGGSTSLPATNGSSSGSNSSLVSSNSLRESHGHGVASRSSADTASIFGIIPDIISLD.

Residue Ala-2 is modified to N-acetylalanine. Residues 2-200 (ADSAELKQMV…KCDFTVQVQL (199 aa)) are required for interaction with MSX1. One can recognise an SAP domain in the interval 11–45 (VMSLRVSELQVLLGYAGRNKHGRKHELLTKALHLL). An LXXLL motif motif is present at residues 19 to 23 (LQVLL). Residues Lys-40 and Lys-46 each participate in a glycyl lysine isopeptide (Lys-Gly) (interchain with G-Cter in SUMO2) cross-link. A Nuclear localization signal motif is present at residues 56–64 (KIKELYRRR). Residues 124–288 (HLTSALHPVH…SMAVYLVKQL (165 aa)) enclose the PINIT domain. Residues Lys-137 and Lys-238 each participate in a glycyl lysine isopeptide (Lys-Gly) (interchain with G-Cter in SUMO2) cross-link. An SP-RING-type zinc finger spans residues 320–405 (PDSEIATTSL…LKYCTDCDEI (86 aa)). Positions 351, 353, 374, and 377 each coordinate Zn(2+). The Nuclear localization signal motif lies at 368 to 380 (KKPTWVCPVCDKK). Lys-453 is covalently cross-linked (Glycyl lysine isopeptide (Lys-Gly) (interchain with G-Cter in SUMO2)). The SUMO1-binding stretch occupies residues 462 to 473 (LTIDSSSDEEEE). The segment at 465–511 (DSSSDEEEEEPPAKRTCPSLSPTSPLSNKGILSLPHQASPVSRTPSL) is disordered. A phosphoserine mark is found at Ser-467, Ser-468, Ser-483, and Ser-485. A compositionally biased stretch (low complexity) spans 482 to 491 (PSLSPTSPLS). Phosphothreonine is present on Thr-487. Residues Ser-488 and Ser-491 each carry the phosphoserine modification. Residue Lys-493 forms a Glycyl lysine isopeptide (Lys-Gly) (interchain with G-Cter in SUMO2) linkage. Ser-503, Ser-510, and Ser-522 each carry phosphoserine. Repeat copies occupy residues 520–523 (NTSL) and 557–560 (NTSL). The segment at 520-615 (NTSLIQDYRH…GSSSGSNSSL (96 aa)) is 4 X 4 AA repeats of N-T-S-L. One copy of the 3; approximate repeat lies at 598–601 (STSL). The disordered stretch occupies residues 600–630 (SLPATNGSSSGSNSSLVSSNSLRESHGHGVA). Residues 605-621 (NGSSSGSNSSLVSSNSL) are compositionally biased toward low complexity. Residues 612–615 (NSSL) form a 4; approximate repeat.

The protein belongs to the PIAS family. In terms of assembly, interacts with NR2C1; the interaction promotes its sumoylation. Interacts with DDX21, CSRP2, AXIN1, JUN, SATB2, PLAG1, TP53 and STAT1 (dimer), following IFNA1-stimulation. Interacts with SP3 (preferentially when SUMO-modified). Interacts with KLF8; the interaction results in SUMO ligation and repression of KLF8 transcriptional activity and of its cell cycle progression into G(1) phase. Interacts with CHUK/IKKA; this interaction induces PIAS1 phosphorylation. Interacts with PTK2/FAK1; the interaction promotes its sumoylation. Interacts with SUMO1, UBE2I, NCOA2 and AR. Interacts with NR2C1; the interaction promotes its sumoylation. Interacts with DDX5. Interacts with MTA1. Interacts with PML (isoform PML-12). Interacts with PRDM1. Interacts (via N-terminus) with MSX1 (via C-terminus); the interaction is required for the localization of both proteins to the nuclear periphery and specific binding of MSX1 to the core enhancer region in target gene promoters. In terms of processing, sumoylated. As to expression, expressed in kidney, heart, spleen, brain and cerebellum; weak expression, if any, in liver and lung.

It is found in the nucleus. The protein localises to the nucleus speckle. The protein resides in the PML body. Its subcellular location is the cytoplasm. It localises to the cytoskeleton. It carries out the reaction S-ubiquitinyl-[E2 ubiquitin-conjugating enzyme]-L-cysteine + [acceptor protein]-L-lysine = [E2 ubiquitin-conjugating enzyme]-L-cysteine + N(6)-ubiquitinyl-[acceptor protein]-L-lysine.. Its pathway is protein modification; protein sumoylation. Its function is as follows. Functions as an E3-type small ubiquitin-like modifier (SUMO) ligase, stabilizing the interaction between UBE2I and the substrate, and as a SUMO-tethering factor. Catalyzes sumoylation of various proteins, such as CEBPB, MRE11, MTA1, PTK2 and PML. Plays a crucial role as a transcriptional coregulation in various cellular pathways, including the STAT pathway, the p53 pathway and the steroid hormone signaling pathway. In vitro, binds A/T-rich DNA. The effects of this transcriptional coregulation, transactivation or silencing, may vary depending upon the biological context. Mediates sumoylation of MRE11, stabilizing MRE11 on chromatin during end resection. Sumoylates PML (at 'Lys-65' and 'Lys-160') and PML-RAR and promotes their ubiquitin-mediated degradation. PIAS1-mediated sumoylation of PML promotes its interaction with CSNK2A1/CK2 which in turn promotes PML phosphorylation and degradation. Enhances the sumoylation of MTA1 and may participate in its paralog-selective sumoylation. Plays a dynamic role in adipogenesis by promoting the SUMOylation and degradation of CEBPB. Mediates the nuclear mobility and localization of MSX1 to the nuclear periphery, whereby MSX1 is brought into the proximity of target myoblast differentiation factor genes. Also required for the binding of MSX1 to the core enhancer region in target gene promoter regions, independent of its sumoylation activity. Capable of binding to the core enhancer region TAAT box in the MYOD1 gene promoter. The sequence is that of E3 SUMO-protein ligase PIAS1 (Pias1) from Mus musculus (Mouse).